Consider the following 1008-residue polypeptide: SKI family transcriptional corepressor 2 (1008 aa).

Disordered stretches follow at residues 280–315 (HLLG…DDDD) and 514–927 (EPGG…KKDV). Composition is skewed to pro residues over residues 284–294 (APPPPPPPPPL) and 525–534 (APPPGQPPPV). Composition is skewed to low complexity over residues 535–544 (VANGPGSGPP) and 578–595 (GVTS…SVGT). The segment covering 626 to 635 (GGKDDAESLA) has biased composition (basic and acidic residues). The segment covering 649–666 (PAHHHHHHHHPHHHHHHP) has biased composition (basic residues). Residues 691-703 (APPPPPPPPPLAP) show a composition bias toward pro residues. Composition is skewed to acidic residues over residues 724–739 (DSSE…QEVD) and 748–766 (GEEE…EDEE). Over residues 787-797 (LSEKGSGRDRT) the composition is skewed to basic and acidic residues. Positions 842–855 (SSSGGSRPGSPVHH) are enriched in low complexity. Basic and acidic residues-rich tracts occupy residues 856–872 (PSLE…KPKE), 880–890 (TKDDNFSDKNK), and 905–915 (FWRERSGEHTQ).

This sequence belongs to the SKI family. As to quaternary structure, interacts with SMAD2 and SMAD3. As to expression, expression is restricted to adult and embryonic central nervous system. Expressed at high levels in the developing cerebellum, ventral metencephalon and myelencephalon at 12.5 dpc (at protein level). In the adult cerebellum, expressed specifically in Purkinje cells.

The protein localises to the nucleus. It is found in the cytoplasm. Acts as a TGF-beta antagonist in the nervous system. Exhibits transcriptional repressor activity. This is SKI family transcriptional corepressor 2 from Mus musculus (Mouse).